The chain runs to 199 residues: MLVPIVVEQTGRGERSYDIYSRLLKDRIVFLGGAIDDAISNLVIAQLLFLEAEDPDKDIHLYINSPGGVVTAGMAIYDTMRYIKAPVSTICVGQAASMGAFLLSGGEKGKRFSLTNSRIMIHQPLGGFQGQATDIHIHAQEILRMKKKLNELMAEHTGQPVEKLEADTERDYFMSGEDAKNYGIIDSIISRNTITGGSR.

Ser97 acts as the Nucleophile in catalysis. His122 is an active-site residue.

This sequence belongs to the peptidase S14 family. As to quaternary structure, fourteen ClpP subunits assemble into 2 heptameric rings which stack back to back to give a disk-like structure with a central cavity, resembling the structure of eukaryotic proteasomes.

The protein resides in the cytoplasm. It carries out the reaction Hydrolysis of proteins to small peptides in the presence of ATP and magnesium. alpha-casein is the usual test substrate. In the absence of ATP, only oligopeptides shorter than five residues are hydrolyzed (such as succinyl-Leu-Tyr-|-NHMec, and Leu-Tyr-Leu-|-Tyr-Trp, in which cleavage of the -Tyr-|-Leu- and -Tyr-|-Trp bonds also occurs).. In terms of biological role, cleaves peptides in various proteins in a process that requires ATP hydrolysis. Has a chymotrypsin-like activity. Plays a major role in the degradation of misfolded proteins. The sequence is that of ATP-dependent Clp protease proteolytic subunit from Geotalea uraniireducens (strain Rf4) (Geobacter uraniireducens).